We begin with the raw amino-acid sequence, 128 residues long: Cytochrome c-type biogenesis protein CcmE (128 aa).

Over 1–8 the chain is Cytoplasmic; it reads MQKRVRNR. The helical; Signal-anchor for type II membrane protein transmembrane segment at 9–29 threads the bilayer; the sequence is LITIIICFCSAFLGISIILYN. At 30–128 the chain is on the periplasmic side; that stretch reads LEKNIVFFLP…KHDENYRPPQ (99 aa). 2 residues coordinate heme: histidine 120 and tyrosine 124.

Belongs to the CcmE/CycJ family.

The protein resides in the cell inner membrane. Heme chaperone required for the biogenesis of c-type cytochromes. Transiently binds heme delivered by CcmC and transfers the heme to apo-cytochromes in a process facilitated by CcmF and CcmH. The sequence is that of Cytochrome c-type biogenesis protein CcmE from Rickettsia rickettsii (strain Iowa).